Here is a 291-residue protein sequence, read N- to C-terminus: Methionine aminopeptidase (291 aa).

Histidine 118 contributes to the substrate binding site. Residues aspartate 135, aspartate 146, and histidine 209 each contribute to the a divalent metal cation site. Histidine 216 is a substrate binding site. Residues glutamate 241 and glutamate 273 each coordinate a divalent metal cation.

This sequence belongs to the peptidase M24A family. Methionine aminopeptidase type 1 subfamily. As to quaternary structure, monomer. Requires Co(2+) as cofactor. Zn(2+) is required as a cofactor. It depends on Mn(2+) as a cofactor. The cofactor is Fe(2+).

It catalyses the reaction Release of N-terminal amino acids, preferentially methionine, from peptides and arylamides.. Its function is as follows. Removes the N-terminal methionine from nascent proteins. The N-terminal methionine is often cleaved when the second residue in the primary sequence is small and uncharged (Met-Ala-, Cys, Gly, Pro, Ser, Thr, or Val). Requires deformylation of the N(alpha)-formylated initiator methionine before it can be hydrolyzed. The chain is Methionine aminopeptidase from Chlamydia pneumoniae (Chlamydophila pneumoniae).